Consider the following 263-residue polypeptide: MADWLIGLIMGAVEGLTEFLPVSSTGHMILTGHLIGFDDERAKVFEVVIQLGSILAVVVIFWKRLWSLVGIGKVTDGPSLNLLHIIIGMIPAGVLGVLFHSTIKEGLFGPGPVVISLVAGGILMIVAEKFSKPSTARTLDEITYKQAFTIGMFQCLALWPGFSRSGSTISGGLLARVSHTAAAEYTFILAVPMMVAASGLDLIKSWDVLSSADITLFVTGFVTAFVVAMLAIVSFLKLLSRVKLTPFAYYRFILAAVFYFFIM.

Transmembrane regions (helical) follow at residues 15 to 37 (GLTEFLPVSSTGHMILTGHLIGF), 42 to 62 (AKVFEVVIQLGSILAVVVIFW), 79 to 99 (SLNLLHIIIGMIPAGVLGVLF), 107 to 127 (LFGPGPVVISLVAGGILMIVA), 142 to 162 (ITYKQAFTIGMFQCLALWPGF), 183 to 203 (AEYTFILAVPMMVAASGLDLI), 216 to 236 (LFVTGFVTAFVVAMLAIVSFL), and 242 to 262 (VKLTPFAYYRFILAAVFYFFI).

The protein belongs to the UppP family.

It localises to the cell membrane. It catalyses the reaction di-trans,octa-cis-undecaprenyl diphosphate + H2O = di-trans,octa-cis-undecaprenyl phosphate + phosphate + H(+). Functionally, catalyzes the dephosphorylation of undecaprenyl diphosphate (UPP). Confers resistance to bacitracin. The protein is Undecaprenyl-diphosphatase 2 of Bacillus cereus (strain ATCC 14579 / DSM 31 / CCUG 7414 / JCM 2152 / NBRC 15305 / NCIMB 9373 / NCTC 2599 / NRRL B-3711).